Reading from the N-terminus, the 523-residue chain is Thiamine pathway transporter THI73 (523 aa).

The Cytoplasmic portion of the chain corresponds to 1 to 79; it reads MKNMSQRSMD…LSPKVLRKVD (79 aa). The helical transmembrane segment at 80-100 threads the bilayer; it reads LFILPFLCCTYLLMFLDKALL. Topologically, residues 101-118 are extracellular; sequence NYAASMGIKDHLKGNEFS. Residues 119–139 form a helical membrane-spanning segment; the sequence is NLGTIFSAAYIFMEPVVTYLI. The Cytoplasmic portion of the chain corresponds to 140–141; it reads QK. A helical membrane pass occupies residues 142-162; that stretch reads FPISKILGTFITVWGIVLACH. Over 163–176 the chain is Extracellular; the sequence is AACKTYASLMVVRT. Residues 177–197 traverse the membrane as a helical segment; the sequence is LLGLFESSSAVGCIAISGMYY. The Cytoplasmic portion of the chain corresponds to 198–207; sequence TKSEQSARIG. A helical transmembrane segment spans residues 208–228; sequence FWATQAGTGYIVGGLISFGFL. The Extracellular portion of the chain corresponds to 229–239; it reads HYHGTAFTSWQ. A helical transmembrane segment spans residues 240–260; sequence IMFLVVGLVTVAFGVLTFLYL. Residues 261–312 lie on the Cytoplasmic side of the membrane; sequence PDNVTNAWFLNKEEKIQVVEHIRANQTGLETKKFKKQQVKELFLHDKFTWPM. The chain crosses the membrane as a helical span at residues 313–333; sequence LLLTACSQISTGAIGTFSVTI. Residues 334 to 345 lie on the Extracellular side of the membrane; it reads TGTFGFDKYETA. Residues 346–366 traverse the membrane as a helical segment; sequence LLQLPIGAITAMIILITTQML. The Cytoplasmic portion of the chain corresponds to 367-371; it reads SRWGH. The chain crosses the membrane as a helical span at residues 372–392; it reads ITLITTSMYIPAIIGCIVLIS. Topologically, residues 393–400 are extracellular; it reads LPLSHKIG. Residues 401–421 traverse the membrane as a helical segment; that stretch reads NLFSLYLLYSGSCVITNIYIW. The Cytoplasmic portion of the chain corresponds to 422–432; sequence NSCNTSGYTKR. The chain crosses the membrane as a helical span at residues 433 to 452; sequence VFRNAITMIVYNVSCIIAPQ. The Extracellular segment spans residues 453–466; that stretch reads MFRAYSAPRYIPAK. The chain crosses the membrane as a helical span at residues 467 to 487; it reads IALLVTQCVCVPLQLYIGYIC. Topologically, residues 488–523 are cytoplasmic; that stretch reads KKENEKRDKEQEGQERKKYQFLDLTDIENRNFRYIY.

It belongs to the major facilitator superfamily. Allantoate permease family.

It localises to the endoplasmic reticulum membrane. The protein localises to the cell membrane. Its function is as follows. Transports either thiamine or, rather, a related metabolite involved in the thiamine biosynthesis pathway. This chain is Thiamine pathway transporter THI73 (THI73), found in Saccharomyces cerevisiae (strain ATCC 204508 / S288c) (Baker's yeast).